The primary structure comprises 175 residues: Peptide deformylase (175 aa).

The Fe cation site is built by C94 and H136. E137 is an active-site residue. H140 provides a ligand contact to Fe cation.

The protein belongs to the polypeptide deformylase family. It depends on Fe(2+) as a cofactor.

The catalysed reaction is N-terminal N-formyl-L-methionyl-[peptide] + H2O = N-terminal L-methionyl-[peptide] + formate. Removes the formyl group from the N-terminal Met of newly synthesized proteins. Requires at least a dipeptide for an efficient rate of reaction. N-terminal L-methionine is a prerequisite for activity but the enzyme has broad specificity at other positions. The chain is Peptide deformylase from Brucella suis biovar 1 (strain 1330).